A 578-amino-acid polypeptide reads, in one-letter code: SWR1 complex bromodomain subunit bdf1 (578 aa).

Positions Met1–Ile18 are enriched in basic and acidic residues. 3 disordered regions span residues Met1–Gln89, Asp192–Asn254, and Ala504–Ala578. The segment covering Gly22–Asp36 has biased composition (polar residues). 2 stretches are compositionally biased toward basic and acidic residues: residues Gly37–Ser52 and Leu60–Val77. One can recognise a Bromo 1 domain in the interval Gly84 to Leu190. Low complexity predominate over residues Asn219–Val242. 3 positions are modified to phosphoserine: Ser221, Ser223, and Ser224. Thr225 is subject to Phosphothreonine. Phosphoserine is present on residues Ser226 and Ser239. The Bromo 2 domain maps to Arg251–Arg360. In terms of domain architecture, NET spans Arg430–Ala510. At Ser511 the chain carries Phosphoserine. Over residues Val526–Arg537 the composition is skewed to basic and acidic residues. Over residues Thr550–Val563 the composition is skewed to polar residues. The segment covering Ser566–Ala578 has biased composition (acidic residues).

It belongs to the BET family. Component of the SWR1 chromatin-remodeling complex.

The protein localises to the nucleus. Functionally, component of the SWR1 complex which mediates the ATP-dependent exchange of histone H2A for the H2A variant HZT1 leading to transcriptional regulation of selected genes by chromatin remodeling. The polypeptide is SWR1 complex bromodomain subunit bdf1 (bdf1) (Schizosaccharomyces pombe (strain 972 / ATCC 24843) (Fission yeast)).